The chain runs to 296 residues: MIRVKIPATSANMGAGFDTLGMALKLYNEITIEETEGETEIKLLGGELDRNYRNNLTYISIIKVYEFFNKEFKGFKIDMSKTNIPLSRGLGSSAACIVGGIVGANALLNEKMTIKDMLKIAVDIEGHPDNVAPALLGGVIISIKDMENIIYSRINVKSQLKYAVMVPDFKVSTELSRKVLPNEYSREDALFNISRCSMLVSALNNGENEKLRYLFEDKIHQPYRKKLINNIDSIFLKAKEYGSLGEFISGSGSTLIAVLEEADENFILKMKTYLDSLKDGWRIFEVENDNNGAVII.

Residue 85 to 95 participates in ATP binding; it reads PLSRGLGSSAA.

The protein belongs to the GHMP kinase family. Homoserine kinase subfamily.

The protein resides in the cytoplasm. It carries out the reaction L-homoserine + ATP = O-phospho-L-homoserine + ADP + H(+). It participates in amino-acid biosynthesis; L-threonine biosynthesis; L-threonine from L-aspartate: step 4/5. Catalyzes the ATP-dependent phosphorylation of L-homoserine to L-homoserine phosphate. This Clostridium acetobutylicum (strain ATCC 824 / DSM 792 / JCM 1419 / IAM 19013 / LMG 5710 / NBRC 13948 / NRRL B-527 / VKM B-1787 / 2291 / W) protein is Homoserine kinase.